The sequence spans 70 residues: Peptide BmKn1 (70 aa).

The first 23 residues, 1 to 23, serve as a signal peptide directing secretion; sequence MKSQTFFLLFLVVLLLAISQSEA. The residue at position 36 (Phe-36) is a Phenylalanine amide. A propeptide spanning residues 40–70 is cleaved from the precursor; that stretch reads SMRDMDTMKYLYDPSLSAADLKTLQKLMENY.

It belongs to the non-disulfide-bridged peptide (NDBP) superfamily. Short antimicrobial peptide (group 4) family. As to expression, expressed by the venom gland.

The protein resides in the secreted. It localises to the target cell membrane. Its function is as follows. Antibacterial peptide. This chain is Peptide BmKn1, found in Olivierus martensii (Manchurian scorpion).